Reading from the N-terminus, the 278-residue chain is MSVPTVLQKILARKAEEVAERRARVNLAEVERLARSADAPRGFANALLERARRKEPAVIAEIKKASPSKGVLREHFVPAEIARSYEAGGAACLSVLTDVDFFQGADAYLKEARAACALPVIRKDFMIDPYQIVEARAIGADCILLIVSALDDMLMGELAATAKSVGLDVLVEVHDGAELERALKTLDTPLVGINNRNLHTFEVSLETTLDLLPEIPRDRLVVTESGILNRADVELMEVSEVYAFLVGEAFMRADDPGLELKRLFFQERGGVVLGADPD.

This sequence belongs to the TrpC family.

It carries out the reaction 1-(2-carboxyphenylamino)-1-deoxy-D-ribulose 5-phosphate + H(+) = (1S,2R)-1-C-(indol-3-yl)glycerol 3-phosphate + CO2 + H2O. Its pathway is amino-acid biosynthesis; L-tryptophan biosynthesis; L-tryptophan from chorismate: step 4/5. In Pseudomonas paraeruginosa (strain DSM 24068 / PA7) (Pseudomonas aeruginosa (strain PA7)), this protein is Indole-3-glycerol phosphate synthase.